Reading from the N-terminus, the 84-residue chain is U-scoloptoxin(10)-Er1a (84 aa).

Positions 1–24 (MSRFCLLFVAFGFVLYFLHMEVTG) are cleaved as a signal peptide.

The protein belongs to the scoloptoxin-10 family. In terms of processing, contains 3 disulfide bonds. As to expression, expressed by the venom gland.

The protein localises to the secreted. This Ethmostigmus rubripes (Giant centipede) protein is U-scoloptoxin(10)-Er1a.